A 496-amino-acid polypeptide reads, in one-letter code: Gasdermin-E (496 aa).

The segment at 1–56 (MFAKATRNFLREVDADGDLIAVSNLNDSDKLQLLSLVTKKKRFWCWQRPKYQFLSL) is membrane targeting domain. An S-(2-succinyl)cysteine modification is found at Cys-45. Lys-120 is covalently cross-linked (Glycyl lysine isopeptide (Lys-Gly) (interchain with G-Cter in ubiquitin)). An S-(2-succinyl)cysteine mark is found at Cys-156, Cys-168, and Cys-180. Lys-189 is covalently cross-linked (Glycyl lysine isopeptide (Lys-Gly) (interchain with G-Cter in ubiquitin)). Cys-235, Cys-371, Cys-408, Cys-417, and Cys-489 each carry S-(2-succinyl)cysteine.

This sequence belongs to the gasdermin family. As to quaternary structure, homooligomer; homooligomeric ring-shaped pore complex containing 27-28 subunits when inserted in the membrane. In terms of processing, cleavage at Asp-270 by CASP3 (mature and uncleaved precursor forms) or granzyme B (GZMB) relieves autoinhibition and is sufficient to initiate pyroptosis. Succination by the Krebs cycle intermediate fumarate, which leads to S-(2-succinyl)cysteine residues, inhibits processing by caspases, and ability to initiate pyroptosis. Succination modification is catalyzed by a non-enzymatic reaction caused by an accumulation of fumarate. Post-translationally, ubiquitinated at Lys-120 and Lys-189 via 'Lys-48'-linked polyubiquitin chains, leading to proteasomal degradation. Deubiquitinated by USP48, leading to increased stability. In terms of processing, palmitoylated. As to expression, expressed in cochlea. Low level of expression in heart, brain, placenta, lung, liver, skeletal muscle, kidney and pancreas, with highest expression in placenta.

The protein resides in the cell membrane. It is found in the cytoplasm. Its subcellular location is the cytosol. Its activity is regulated as follows. The full-length protein before cleavage is inactive: intramolecular interactions between N- and C-terminal domains mediate autoinhibition in the absence of activation signal. The intrinsic pyroptosis-inducing activity is carried by the released N-terminal moiety (Gasdermin-E, N-terminal) following cleavage by CASP3 or granzyme B (GZMB). Activated by NLRP1 in the absence of GSDMD expression: NLRP1 cleaves and activates CASP8, promoting downstream activation of CASP3 and subsequent activation of GSDME. (Microbial infection) Activated upon human coronavirus SARS-CoV-2 infection, leading to lung epithelial cell death. Activation takes place in response to (1) activation of NLRP1 and (2) inactivation of GSDMD following NLRP1 and GSDMD cleavage by the SARS-CoV-2 3C-like proteinase nsp5. In terms of biological role, precursor of a pore-forming protein that converts non-inflammatory apoptosis to pyroptosis. This form constitutes the precursor of the pore-forming protein: upon cleavage, the released N-terminal moiety (Gasdermin-E, N-terminal) binds to membranes and forms pores, triggering pyroptosis. Its function is as follows. Pore-forming protein produced by cleavage by CASP3 or granzyme B (GZMB), which converts non-inflammatory apoptosis to pyroptosis or promotes granzyme-mediated pyroptosis, respectively. After cleavage, moves to the plasma membrane, homooligomerizes within the membrane and forms pores of 10-15 nanometers (nm) of inner diameter, allowing the release of mature interleukins (IL1B and IL16) and triggering pyroptosis. Binds to inner leaflet lipids, bisphosphorylated phosphatidylinositols, such as phosphatidylinositol (4,5)-bisphosphate. Cleavage by CASP3 switches CASP3-mediated apoptosis induced by TNF or danger signals, such as chemotherapy drugs, to pyroptosis. Mediates secondary necrosis downstream of the mitochondrial apoptotic pathway and CASP3 activation as well as in response to viral agents. Exhibits bactericidal activity. Cleavage by GZMB promotes tumor suppressor activity by triggering robust anti-tumor immunity. Suppresses tumors by mediating granzyme-mediated pyroptosis in target cells of natural killer (NK) cells: cleavage by granzyme B (GZMB), delivered to target cells from NK-cells, triggers pyroptosis of tumor cells and tumor suppression. May play a role in the p53/TP53-regulated cellular response to DNA damage. Functionally, (Microbial infection) Pore-forming protein, which promotes maternal placental pyroptosis in response to Zika virus infection, contributing to adverse fetal outcomes. In Homo sapiens (Human), this protein is Gasdermin-E.